A 518-amino-acid chain; its full sequence is MIPDVSQALAWLEKHPQALKGIQRGLERETLRVNADGTLATTGHPEALGSALTHKWITTDFAEALLEFITPVDGDIQHMLTFMRDLHRYTARKLGDERMWPLSMPCYIAEGQDIELAQYGTSNTGRFKTLYREGLKNRYGALMQTISGVHYNFSLPMAFWQAKCGVTEGEAAKEKISAGYFRLIRNYYRFGWVIPYLFGASPAICSSFLQGKPTTLPFEKTDCGMYYLPYATSLRLSDLGYTNKSQSNLGITFNDLHEYVAGLKRAIKTPSEEYARIGVEKDGKRLQINSNVLQIENELYAPIRPKRVTRSGESPSDALLRGGIEYIEVRSLDINPFSPIGVDEQQVRFLDLFMVWCVLADAPEMSSDELLCTRTNWNRVILEGRKPGLTLGIGCETAQFPLPKVGKDLFRDLKRVAQTLDSIHGGEEYQKVCDELVACFDNPELTFSARILRSMIDEGIGGTGKAFGEAYRNLLREEPLEILQEEEFIAERDASVRRQQEIEAADTEPFAAWLAKHA.

Belongs to the glutamate--cysteine ligase type 1 family. Type 1 subfamily.

It carries out the reaction L-cysteine + L-glutamate + ATP = gamma-L-glutamyl-L-cysteine + ADP + phosphate + H(+). It participates in sulfur metabolism; glutathione biosynthesis; glutathione from L-cysteine and L-glutamate: step 1/2. The polypeptide is Glutamate--cysteine ligase (Salmonella agona (strain SL483)).